A 565-amino-acid polypeptide reads, in one-letter code: Urocanate hydratase (565 aa).

NAD(+) is bound by residues 58–59, Gln136, 182–184, Glu202, Arg207, 245–246, 266–270, 276–277, and Tyr325; these read GG, GMG, NA, QTSAH, and YL. Residue Cys413 is part of the active site. An NAD(+)-binding site is contributed by Gly495.

This sequence belongs to the urocanase family. The cofactor is NAD(+).

Its subcellular location is the cytoplasm. The catalysed reaction is 4-imidazolone-5-propanoate = trans-urocanate + H2O. The protein operates within amino-acid degradation; L-histidine degradation into L-glutamate; N-formimidoyl-L-glutamate from L-histidine: step 2/3. In terms of biological role, catalyzes the conversion of urocanate to 4-imidazolone-5-propionate. This chain is Urocanate hydratase, found in Vibrio vulnificus (strain YJ016).